Consider the following 334-residue polypeptide: Phosphate acyltransferase (334 aa).

This sequence belongs to the PlsX family. As to quaternary structure, homodimer. Probably interacts with PlsY.

It is found in the cytoplasm. The enzyme catalyses a fatty acyl-[ACP] + phosphate = an acyl phosphate + holo-[ACP]. The protein operates within lipid metabolism; phospholipid metabolism. Catalyzes the reversible formation of acyl-phosphate (acyl-PO(4)) from acyl-[acyl-carrier-protein] (acyl-ACP). This enzyme utilizes acyl-ACP as fatty acyl donor, but not acyl-CoA. The protein is Phosphate acyltransferase of Clostridium tetani (strain Massachusetts / E88).